The following is a 212-amino-acid chain: Placenta-specific protein 1 (212 aa).

The N-terminal stretch at 1–22 is a signal peptide; it reads MKVFKFIGLMILLTSAFSAGSG.

Belongs to the PLAC1 family. In terms of tissue distribution, expressed in placenta. Localizes primarily to differentiated syncytiotrophoblast throughout gestation as well as to a small population of villous cytotrophoblasts. Also detected in maternal blood and rapidly disappears following delivery, but is not detected in other adult or fetal tissues examined.

Its subcellular location is the secreted. Functionally, may play a role in placental development. The chain is Placenta-specific protein 1 from Homo sapiens (Human).